The sequence spans 181 residues: Gastrokine-3 (181 aa).

Residues 1 to 20 (MKHLVASSILGVFVLTPSLA) form the signal peptide. Residues 53–145 (NNIFSEWDGI…MCRDDPTYFA (93 aa)) enclose the BRICHOS domain. Cys-80 and Cys-137 are disulfide-bonded.

It belongs to the gastrokine family.

It is found in the secreted. Its function is as follows. May inhibit gastric epithelial cell proliferation. The sequence is that of Gastrokine-3 (GKN3P) from Homo sapiens (Human).